Here is a 29-residue protein sequence, read N- to C-terminus: L-serine dehydratase, beta chain (29 aa).

This sequence belongs to the iron-sulfur dependent L-serine dehydratase family. In terms of assembly, heterodimer of an alpha chain and a beta chain. Requires [4Fe-4S] cluster as cofactor.

The enzyme catalyses L-serine = pyruvate + NH4(+). Its pathway is carbohydrate biosynthesis; gluconeogenesis. The polypeptide is L-serine dehydratase, beta chain (Anaerotignum propionicum (Clostridium propionicum)).